The primary structure comprises 682 residues: Transcription factor 12 (682 aa).

Residues aspartate 19–phenylalanine 27 carry the 9aaTAD motif. 3 disordered regions span residues alanine 25–arginine 122, leucine 140–serine 219, and serine 281–threonine 313. Polar residues-rich tracts occupy residues proline 30–glycine 48 and glycine 56–phenylalanine 76. 3 positions are modified to phosphoserine: serine 47, serine 67, and serine 79. A compositionally biased stretch (basic and acidic residues) spans histidine 81 to alanine 93. Serine 98 carries the post-translational modification Phosphoserine. 2 stretches are compositionally biased toward polar residues: residues proline 101 to serine 121 and alanine 144 to serine 163. Residue lysine 110 forms a Glycyl lysine isopeptide (Lys-Gly) (interchain with G-Cter in SUMO2) linkage. Residue serine 116 is modified to Phosphoserine. Residues leucine 119 to leucine 140 form a leucine-zipper region. A Glycyl lysine isopeptide (Lys-Gly) (interchain with G-Cter in SUMO2) cross-link involves residue lysine 181. Positions lysine 182–alanine 196 are interaction with RUNX1T1. The segment covering valine 282 to proline 306 has biased composition (polar residues). Threonine 313 carries the phosphothreonine modification. Phosphoserine is present on serine 333. 2 disordered regions span residues proline 349–serine 395 and serine 462–methionine 580. Low complexity predominate over residues threonine 352 to proline 363. 2 stretches are compositionally biased toward polar residues: residues valine 364–tryptophan 376 and alanine 383–serine 395. A compositionally biased stretch (low complexity) spans serine 481 to threonine 492. Polar residues predominate over residues leucine 506–glutamate 517. Basic and acidic residues-rich tracts occupy residues isoleucine 518–histidine 530 and aspartate 536–valine 551. Residue lysine 519 forms a Glycyl lysine isopeptide (Lys-Gly) (interchain with G-Cter in SUMO2) linkage. Serine 540 is modified (phosphoserine). Residue lysine 550 forms a Glycyl lysine isopeptide (Lys-Gly) (interchain with G-Cter in SUMO2) linkage. Position 557 is a phosphothreonine (threonine 557). Serine 558 and serine 559 each carry phosphoserine. Residues proline 568–methionine 580 show a composition bias toward basic and acidic residues. Positions glutamate 577 to leucine 630 constitute a bHLH domain. Residues lysine 609 and lysine 653 each participate in a glycyl lysine isopeptide (Lys-Gly) (interchain with G-Cter in SUMO2) cross-link. Residues glutamine 632–serine 655 are class A specific domain. The segment at glutamate 651–methionine 682 is disordered. Over residues proline 661–leucine 672 the composition is skewed to low complexity. Positions serine 673–methionine 682 are enriched in polar residues.

In terms of assembly, efficient DNA binding requires dimerization with another bHLH protein. Forms homo- or heterooligomers with myogenin, E12 and ITF2 proteins. Interacts with PTF1A. Interacts with NEUROD2. Interacts with RUNX1T1. Interacts with AML1-MTG8/ETO (via nervy homology region 2 in oligomerized form). Interacts with BHLHA9. As to expression, expressed in several tissues and cell types including skeletal muscle, thymus, and a B-cell line.

The protein localises to the nucleus. Transcriptional regulator. Involved in the initiation of neuronal differentiation. Activates transcription by binding to the E box (5'-CANNTG-3'). May be involved in the functional network that regulates the development of the GnRH axis. This is Transcription factor 12 (TCF12) from Homo sapiens (Human).